The chain runs to 147 residues: Glucosamine 6-phosphate N-acetyltransferase (147 aa).

Positions 7–147 constitute an N-acetyltransferase domain; the sequence is LELRVLEESD…AHERQMRLDL (141 aa). Residues Thr28 and 86–88 contribute to the D-glucosamine 6-phosphate site; that span reads EDV. Residues 88 to 90 and 96 to 101 each bind acetyl-CoA; these read VVV and GAGLGK. Residues 117 to 118 and Asp122 contribute to the D-glucosamine 6-phosphate site; that span reads YK. 131 to 133 is an acetyl-CoA binding site; the sequence is YEK.

The protein belongs to the acetyltransferase family. GNA1 subfamily. As to quaternary structure, homodimer. Post-translationally, contains poly-N-acetyllactosamines.

The protein resides in the glycosome. It carries out the reaction D-glucosamine 6-phosphate + acetyl-CoA = N-acetyl-D-glucosamine 6-phosphate + CoA + H(+). It participates in nucleotide-sugar biosynthesis; UDP-N-acetyl-alpha-D-glucosamine biosynthesis; N-acetyl-alpha-D-glucosamine 1-phosphate from alpha-D-glucosamine 6-phosphate (route I): step 1/2. Functionally, involved in the biosynthesis of UDP-N-acetyl-alpha-D-glucosamine. Catalyzes the formation of N-acetyl-D-glucosamine 6-phosphate from acetyl-coenzyme A (acetyl-CoA) and D-glucosamine 6-phosphate. In Trypanosoma brucei brucei, this protein is Glucosamine 6-phosphate N-acetyltransferase.